Consider the following 293-residue polypeptide: Prohibitin-2 (293 aa).

A helical; Signal-anchor for type II membrane protein transmembrane segment spans residues Phe21–Leu41. Residues Gly190–Ala235 adopt a coiled-coil conformation.

Belongs to the prohibitin family. In terms of assembly, the mitochondrial prohibitin complex consists of two subunits (PHB1 and PHB2), assembled into a membrane-associated ring-shaped supercomplex of approximately 1 mDa.

The protein localises to the mitochondrion inner membrane. It is found in the cytoplasm. It localises to the nucleus. Its subcellular location is the cell membrane. In terms of biological role, protein with pleiotropic attributes mediated in a cell-compartment- and tissue-specific manner, which include the plasma membrane-associated cell signaling functions, mitochondrial chaperone, and transcriptional co-regulator of transcription factors and sex steroid hormones in the nucleus. In the mitochondria, together with PHB, forms large ring complexes (prohibitin complexes) in the inner mitochondrial membrane (IMM) and functions as a chaperone protein that stabilizes mitochondrial respiratory enzymes and maintains mitochondrial integrity in the IMM, which is required for mitochondrial morphogenesis, neuronal survival, and normal lifespan. Its function is as follows. In the nucleus, serves as transcriptional co-regulator. The polypeptide is Prohibitin-2 (phbB) (Dictyostelium discoideum (Social amoeba)).